Reading from the N-terminus, the 118-residue chain is Small ribosomal subunit protein uS13 (118 aa).

Residues 99–118 are disordered; the sequence is GQRTRTNARTRKGPRKAIKK.

It belongs to the universal ribosomal protein uS13 family. In terms of assembly, part of the 30S ribosomal subunit. Forms a loose heterodimer with protein S19. Forms two bridges to the 50S subunit in the 70S ribosome.

Functionally, located at the top of the head of the 30S subunit, it contacts several helices of the 16S rRNA. In the 70S ribosome it contacts the 23S rRNA (bridge B1a) and protein L5 of the 50S subunit (bridge B1b), connecting the 2 subunits; these bridges are implicated in subunit movement. Contacts the tRNAs in the A and P-sites. This chain is Small ribosomal subunit protein uS13, found in Xylella fastidiosa (strain M23).